Consider the following 629-residue polypeptide: TRAF3-interacting protein 1 (629 aa).

The disordered stretch occupies residues 130-511 (AGDKLDQKGK…RSLVSEASRK (382 aa)). The span at 145–306 (SQDKENREGR…KIKAAEEISK (162 aa)) shows a compositional bias: basic and acidic residues. The stretch at 220–282 (RDREKDKTRE…RREKEKDKER (63 aa)) forms a coiled coil. Positions 352-362 (EQDETESEGEA) are enriched in acidic residues. Residues 394-403 (RPSSARPAAP) are compositionally biased toward low complexity. The span at 471–511 (GDDKHGGLVKKILETKKDYESSPSSKSKEQDRSLVSEASRK) shows a compositional bias: basic and acidic residues. A coiled-coil region spans residues 511 to 602 (KKERELVARE…QLIKDQQDKI (92 aa)).

This sequence belongs to the TRAF3IP1 family. In terms of assembly, component of the IFT complex B, at least composed of ift20, ift22, ift25, ift27, ift46, ift52, traf3ip1/ift54, ift57, ift74, ift80, ift81, and ift88. Interacts with ift88. Interacts with il13ra1. Binds to microtubules, traf3 and disc1. Interacts with map4.

The protein resides in the cytoplasm. The protein localises to the cytoskeleton. Its subcellular location is the cell projection. It is found in the cilium. It localises to the cilium axoneme. The protein resides in the cilium basal body. Functionally, plays an inhibitory role on IL13 signaling by binding to IL13RA1 and recruits TRAF3 and DISC1 to the microtubules. Involved in the regulation of microtubule cytoskeleton organization. Is a negative regulator of microtubule stability, acting through the control of MAP4 levels. Involved in ciliogenesis. This chain is TRAF3-interacting protein 1 (traf3ip1), found in Danio rerio (Zebrafish).